We begin with the raw amino-acid sequence, 285 residues long: Tumor necrosis factor ligand superfamily member 13B (285 aa).

The Cytoplasmic segment spans residues M1–K46. A helical; Signal-anchor for type II membrane protein membrane pass occupies residues L47–Y67. Over Q68–L285 the chain is Extracellular. A disordered region spans residues I114 to P138. N124 carries an N-linked (GlcNAc...) asparagine glycan. Residues D145–L284 enclose the THD domain. Cysteines 232 and 245 form a disulfide. N-linked (GlcNAc...) (high mannose) asparagine glycosylation occurs at N242.

It belongs to the tumor necrosis factor family. As to quaternary structure, homotrimer. Isoform 2 heteromultimerizes with isoform 1, probably limiting the amount of functional isoform 1 on the cell surface. Isoform 3 is unlikely form trimers or bind to BAFF receptors. In terms of processing, the soluble form derives from the membrane form by proteolytic processing. Isoform 2 is not efficiently shed from the membrane unlike isoform 1. Post-translationally, N-glycosylated. Abundantly expressed in peripheral blood Leukocytes and is specifically expressed in monocytes and macrophages. Also found in the spleen, lymph node, bone marrow, T-cells and dendritic cells. A lower expression seen in placenta, heart, lung, fetal liver, thymus, and pancreas. Isoform 2 is expressed in many myeloid cell lines.

The protein localises to the cell membrane. It is found in the secreted. Functionally, cytokine that binds to TNFRSF13B/TACI and TNFRSF17/BCMA. TNFSF13/APRIL binds to the same 2 receptors. Together, they form a 2 ligands -2 receptors pathway involved in the stimulation of B- and T-cell function and the regulation of humoral immunity. A third B-cell specific BAFF-receptor (BAFFR/BR3) promotes the survival of mature B-cells and the B-cell response. Its function is as follows. Isoform 2 seems to inhibit isoform 1 secretion and bioactivity. Acts as a transcription factor for its own parent gene, in association with NF-kappa-B p50 subunit, at least in autoimmune and proliferative B-cell diseases. The presence of Delta4BAFF is essential for soluble BAFF release by IFNG/IFN-gamma-stimulated monocytes and for B-cell survival. It can directly or indirectly regulate the differential expression of a large number of genes involved in the innate immune response and the regulation of apoptosis. This is Tumor necrosis factor ligand superfamily member 13B (TNFSF13B) from Homo sapiens (Human).